A 1222-amino-acid chain; its full sequence is Serine/threonine-protein kinase WNK4 (1222 aa).

Residues 1 to 17 (MLAPRNTETGVPMSQTE) show a composition bias toward polar residues. Positions 1-165 (MLAPRNTETG…DTETQAVATS (165 aa)) are disordered. Over residues 90-101 (AGPTRSPPSSSK) the composition is skewed to low complexity. Ser95 is subject to Phosphoserine. The span at 135 to 152 (EPPRVPDAAARERRREQE) shows a compositional bias: basic and acidic residues. Glycyl lysine isopeptide (Lys-Gly) (interchain with G-Cter in ubiquitin) cross-links involve residues Lys154 and Lys172. Residues 171–429 (LKFDIEIGRG…IQDLLAHAFF (259 aa)) enclose the Protein kinase domain. Residue Ser181 participates in ATP binding. Residues Lys183, Lys223, and Lys238 each participate in a glycyl lysine isopeptide (Lys-Gly) (interchain with G-Cter in ubiquitin) cross-link. ATP-binding positions include 251–254 (TELM) and Lys301. Residue Asp318 is the Proton acceptor of the active site. Residue Lys325 forms a Glycyl lysine isopeptide (Lys-Gly) (interchain with G-Cter in ubiquitin) linkage. 2 positions are modified to phosphoserine; by autocatalysis: Ser328 and Ser332. Glycyl lysine isopeptide (Lys-Gly) (interchain with G-Cter in ubiquitin) cross-links involve residues Lys384, Lys390, Lys447, and Lys451. The interval 525-562 (RELEVLPPDSGPPPATVSLAPGPPSAFPPEPEEPEADQ) is disordered. Residues 533-553 (DSGPPPATVSLAPGPPSAFPP) are compositionally biased toward pro residues. The interval 554–564 (EPEEPEADQHQ) is interaction with KLHL3. Ser572 bears the Phosphoserine mark. Disordered regions lie at residues 626–659 (RSGPGSDFSPGDSYASDAASGLSDMGEGGQMRKN), 747–809 (DAGP…GAPF), 877–896 (SYPQDPLSPTSLPVCPSPPS), and 927–976 (SPGL…AQPL). 4 stretches are compositionally biased toward low complexity: residues 627 to 638 (SGPGSDFSPGDS), 757 to 769 (ALSPQEEPAALPA), 793 to 807 (STSPSSPGTPLSPGA), and 877 to 890 (SYPQDPLSPTSLPV). Residues 935–944 (PPAPPGPLPS) show a composition bias toward pro residues. Positions 953–963 (DQESLSAQTAE) are enriched in polar residues. Lys990 is covalently cross-linked (Glycyl lysine isopeptide (Lys-Gly) (interchain with G-Cter in ubiquitin)). The short motif at 996-999 (RFQV) is the RFXV motif element. The disordered stretch occupies residues 1000-1087 (TSSKEPAEPP…SSPILSHPSP (88 aa)). A Phosphoserine modification is found at Ser1014. The span at 1014-1032 (SPTLSRSLKLPSPPLTSES) shows a compositional bias: low complexity. Positions 1044–1056 (ETREALAESDRAA) are enriched in basic and acidic residues. Glycyl lysine isopeptide (Lys-Gly) (interchain with G-Cter in ubiquitin) cross-links involve residues Lys1123, Lys1136, and Lys1137. Residues 1166–1222 (RRLSKGSFPTSRRNSLQRSDLPGPGIMRRNSLSGSSTGSQEQRASKGVTFAGDIGRM) form a disordered region. Composition is skewed to polar residues over residues 1172–1183 (SFPTSRRNSLQR) and 1195–1207 (NSLSGSSTGSQEQ). Residue Ser1196 is modified to Phosphoserine.

The protein belongs to the protein kinase superfamily. Ser/Thr protein kinase family. WNK subfamily. In terms of assembly, interacts with the C-terminal region of KCNJ1. Interacts with WNK1 and WNK3. Interacts with KLHL3. Mg(2+) serves as cofactor. Autophosphorylated at Ser-328 and Ser-332, promoting its activation. Phosphorylated by WNK1 and WNK3. Phosphorylated at Ser-572 in a MAP3K15/ASK3-dependent process in response to osmotic stress or hypotonic low-chloride stimulation. Post-translationally, ubiquitinated by the BCR(KLHL3) complex, leading to its degradation. Also ubiquitinated by the BCR(KLHL2) complex. As to expression, locates to the distal convoluted tubule, the medullary collecting duct and the cortical collecting duct of the kidney. Expressed in pancreatic duct.

Its subcellular location is the cell junction. It localises to the tight junction. It carries out the reaction L-seryl-[protein] + ATP = O-phospho-L-seryl-[protein] + ADP + H(+). The enzyme catalyses L-threonyl-[protein] + ATP = O-phospho-L-threonyl-[protein] + ADP + H(+). Activation requires autophosphorylation of Ser-328 and Ser-332. Autophosphorylation and subsequent activation is inhibited by increases in intracellular ionic strength: Cl(-) potently inhibits WNK4 kinase activity via direct binding. Also inhibited by K(+) ions. Its function is as follows. Serine/threonine-protein kinase component of the WNK4-SPAK/OSR1 kinase cascade, which acts as a key regulator of ion transport in the distal nephron and blood pressure. The WNK4-SPAK/OSR1 kinase cascade is composed of WNK4, which mediates phosphorylation and activation of downstream kinases OXSR1/OSR1 and STK39/SPAK. Following activation, OXSR1/OSR1 and STK39/SPAK catalyze phosphorylation of ion cotransporters, such as SLC12A1/NKCC2, SLC12A2/NKCC1, SLC12A3/NCC, SLC12A5/KCC2 or SLC12A6/KCC3, regulating their activity. Acts as a molecular switch that regulates the balance between renal salt reabsorption and K(+) secretion by modulating the activities of renal transporters and channels, including the Na-Cl cotransporter SLC12A3/NCC and the K(+) channel, KCNJ1/ROMK. Regulates NaCl reabsorption in the distal nephron by activating the thiazide-sensitive Na-Cl cotransporter SLC12A3/NCC in distal convoluted tubule cells of kidney: activates SLC12A3/NCC in a OXSR1/OSR1- and STK39/SPAK-dependent process. Also acts as a scaffold protein independently of its protein kinase activity: negatively regulates cell membrane localization of various transporters and channels (CFTR, KCNJ1/ROMK, SLC4A4, SLC26A9 and TRPV4) by clathrin-dependent endocytosis. Also inhibits the activity of the epithelial Na(+) channel (ENaC) SCNN1A, SCNN1B, SCNN1D in a inase-independent mechanism. May also phosphorylate NEDD4L. The protein is Serine/threonine-protein kinase WNK4 of Mus musculus (Mouse).